A 342-amino-acid chain; its full sequence is tRNA N6-adenosine threonylcarbamoyltransferase (342 aa).

Fe cation is bound by residues H112 and H116. Substrate is bound by residues 134–138, D167, G180, and N278; that span reads IVSGG. Residue D306 coordinates Fe cation.

This sequence belongs to the KAE1 / TsaD family. Requires Fe(2+) as cofactor.

The protein localises to the cytoplasm. The catalysed reaction is L-threonylcarbamoyladenylate + adenosine(37) in tRNA = N(6)-L-threonylcarbamoyladenosine(37) in tRNA + AMP + H(+). Required for the formation of a threonylcarbamoyl group on adenosine at position 37 (t(6)A37) in tRNAs that read codons beginning with adenine. Is involved in the transfer of the threonylcarbamoyl moiety of threonylcarbamoyl-AMP (TC-AMP) to the N6 group of A37, together with TsaE and TsaB. TsaD likely plays a direct catalytic role in this reaction. In Anaplasma phagocytophilum (strain HZ), this protein is tRNA N6-adenosine threonylcarbamoyltransferase.